The following is a 108-amino-acid chain: Cell division topological specificity factor (108 aa).

Belongs to the MinE family.

Its function is as follows. Prevents the cell division inhibition by proteins MinC and MinD at internal division sites while permitting inhibition at polar sites. This ensures cell division at the proper site by restricting the formation of a division septum at the midpoint of the long axis of the cell. In Prochlorococcus marinus (strain MIT 9215), this protein is Cell division topological specificity factor.